The chain runs to 388 residues: S-adenosylmethionine synthase (388 aa).

Position 14 (His14) interacts with ATP. Mg(2+) is bound at residue Asp16. Glu42 contacts K(+). Residues Glu55 and Gln98 each contribute to the L-methionine site. The segment at 98 to 108 is flexible loop; it reads QSAEISSAVDQ. Residues 166 to 168, Asp242, 248 to 249, Ala265, and Lys269 contribute to the ATP site; these read DGK and RK. Asp242 is a binding site for L-methionine. Lys273 is an L-methionine binding site.

Belongs to the AdoMet synthase family. In terms of assembly, homotetramer; dimer of dimers. Mg(2+) serves as cofactor. Requires K(+) as cofactor.

It localises to the cytoplasm. It carries out the reaction L-methionine + ATP + H2O = S-adenosyl-L-methionine + phosphate + diphosphate. Its pathway is amino-acid biosynthesis; S-adenosyl-L-methionine biosynthesis; S-adenosyl-L-methionine from L-methionine: step 1/1. Catalyzes the formation of S-adenosylmethionine (AdoMet) from methionine and ATP. The overall synthetic reaction is composed of two sequential steps, AdoMet formation and the subsequent tripolyphosphate hydrolysis which occurs prior to release of AdoMet from the enzyme. In Oenococcus oeni (strain ATCC BAA-331 / PSU-1), this protein is S-adenosylmethionine synthase.